Here is a 429-residue protein sequence, read N- to C-terminus: Intraflagellar transport protein 57 homolog (429 aa).

Residues 305–369 adopt a coiled-coil conformation; sequence KYINNQLEHL…MEEKGSSMTD (65 aa). The interval 335 to 426 is pDED; it reads GNGGVTERTR…HAAVTPESAI (92 aa).

It belongs to the IFT57 family. In terms of assembly, component of the IFT complex B, at least composed of IFT20, IFT22, IFT25, IFT27, IFT46, IFT52, TRAF3IP1/IFT54, IFT57, IFT74, IFT80, IFT81, and IFT88. Interacts with IFT20. Interacts with IFT88. Interacts with IFT80, IFT-81, IFT74, IFT172, IFT70B and KIF17. Interacts with BLOC1S2. Interacts with RYBP. Interacts with HOMER1; the interaction possibly prevents the pro-apoptotic effects of IFT57. Interacts with HIP1. In normal conditions, it poorly interacts with HIP1, HIP1 being strongly associated with HTT. However, in mutant HTT proteins with a long poly-Gln region, interaction between HTT and HIP1 is inhibited, promoting the interaction between HIP1 and IFT57, leading to apoptosis. Interacts with BFAR. Interacts with TTC25. Interacts with USH1G. In terms of tissue distribution, present in retina and testis. In brain, it is present in the cortex, striatum, globus pallidus, hypothalamus and cerebellum. Present at high level in neurons and neuropil throughout the brain (at protein level). Expressed in hippocampal neurons, where it colocalizes with HOMER1 at postsynaptic regions.

The protein resides in the cell projection. It localises to the cilium. It is found in the cytoplasm. Its subcellular location is the cytoskeleton. The protein localises to the cilium basal body. The protein resides in the golgi apparatus. Functionally, required for the formation of cilia. Plays an indirect role in sonic hedgehog signaling, cilia being required for all activity of the hedgehog pathway. Has pro-apoptotic function via its interaction with HIP1, leading to recruit caspase-8 (CASP8) and trigger apoptosis. Has the ability to bind DNA sequence motif 5'-AAAGACATG-3' present in the promoter of caspase genes such as CASP1, CASP8 and CASP10, suggesting that it may act as a transcription regulator; however the relevance of such function remains unclear. The polypeptide is Intraflagellar transport protein 57 homolog (Ift57) (Mus musculus (Mouse)).